We begin with the raw amino-acid sequence, 335 residues long: Urokinase plasminogen activator surface receptor (335 aa).

Residues 1–22 (MGHPLLLPLLLLLHTCVPASWG) form the signal peptide. UPAR/Ly6 domains lie at 23–114 (LRCM…RSRY), 115–213 (LECI…PQNG), and 214–305 (HQCY…YRKG). 3 disulfides stabilise this stretch: C25–C46, C28–C34, and C39–C67. An N-linked (GlcNAc...) asparagine glycan is attached at N74. Intrachain disulfides connect C93–C98, C117–C144, C120–C127, C137–C169, C175–C192, C193–C198, C216–C244, C219–C227, C237–C263, C269–C287, and C288–C293. N-linked (GlcNAc...) asparagine glycans are attached at residues N184, N194, N222, N255, and N284. G305 carries the GPI-anchor amidated glycine lipid modification. The propeptide at 306–335 (AAPQPGPAHLSLTITLLMTARLWGGTLLWT) is removed in mature form.

In terms of assembly, monomer. Interacts (via the UPAR/Ly6 domains) with SRPX2. Interacts with MRC2. Interacts with FAP (seprase); the interaction occurs at the cell surface of invadopodia membrane. Interacts with SORL1 (via N-terminal ectodomain); this interaction decreases PLAUR internalization. The ternary complex composed of PLAUR-PLAU-SERPINE1 also interacts with SORL1.

Its subcellular location is the cell membrane. The protein resides in the cell projection. The protein localises to the invadopodium membrane. Acts as a receptor for urokinase plasminogen activator. Plays a role in localizing and promoting plasmin formation. Mediates the proteolysis-independent signal transduction activation effects of U-PA. It is subject to negative-feedback regulation by U-PA which cleaves it into an inactive form. The chain is Urokinase plasminogen activator surface receptor (PLAUR) from Macaca fascicularis (Crab-eating macaque).